The sequence spans 886 residues: Cadherin-1 (886 aa).

The N-terminal stretch at 1–23 (MGARCRSFSALLLLLQVSSWLCQ) is a signal peptide. Residues 24-158 (QPESESDSCR…FHQGLRRQKR (135 aa)) constitute a propeptide that is removed on maturation. Residues 24-713 (QPESESDSCR…SLEAGLQVPA (690 aa)) are Extracellular-facing. Cadherin domains lie at 159–266 (DWVI…RPEF), 267–379 (IQEV…APIF), 380–490 (NPST…APIF), 491–597 (VPAE…DNAP), and 598–701 (IPEP…NCMK). Asp-261 is a Ca(2+) binding site. Residues Ser-284 and Ser-289 are each glycosylated (O-linked (Man...) serine). Residue Asp-292 participates in Ca(2+) binding. Thr-362, Thr-474, Thr-476, and Thr-513 each carry an O-linked (Man...) threonine glycan. Asn-562 carries N-linked (GlcNAc...) asparagine glycosylation. Residues Thr-580, Thr-582, and Thr-584 are each glycosylated (O-linked (Man...) threonine). An N-linked (GlcNAc...) asparagine glycan is attached at Asn-641. Residues 714 to 734 (ILGILGGILALLILILLLLLF) form a helical membrane-spanning segment. Topologically, residues 735 to 886 (LRRRTVVKEP…ADMYGGGEED (152 aa)) are cytoplasmic. Residues 751–771 (DTRDNVYYYDEEGGGEEDQDF) are disordered. 3 positions are modified to phosphotyrosine; by SRC: Tyr-757, Tyr-758, and Tyr-759. Over residues 759–771 (YDEEGGGEEDQDF) the composition is skewed to acidic residues. Positions 762-773 (EGGGEEDQDFDL) are required for binding CTNND1 and PSEN1. Phosphoserine is present on residues Ser-774, Ser-797, Ser-842, Ser-844, and Ser-850. Residues 815 to 886 (IDENLKAADS…ADMYGGGEED (72 aa)) form a required for binding alpha, beta and region.

In terms of assembly, homodimer; disulfide-linked. Component of an E-cadherin/ catenin adhesion complex composed of at least E-cadherin/CDH1, beta-catenin/CTNNB1 or gamma-catenin/JUP, and potentially alpha-catenin/CTNNA1; the complex is located to adherens junctions. Found in a complex composed of CDH1, RAP1A and PKP3; PKP3 acts as a scaffold protein within the complex, the complex is required for CDH1 localization to mature desmosome cell junctions. Interacts with the TRPV4 and CTNNB1 complex. Interacts with CTNND1. The stable association of CTNNA1 is controversial as CTNNA1 was shown not to bind to F-actin when assembled in the complex. Alternatively, the CTNNA1-containing complex may be linked to F-actin by other proteins such as LIMA1. Interaction with PSEN1, cleaves CDH1 resulting in the disassociation of cadherin-based adherens junctions (CAJs). Interacts with AJAP1 and DLGAP5. Interacts with TBC1D2. Interacts with LIMA1. Interacts with CAV1. Interacts with PIP5K1C. Interacts with DDR1; this stabilizes CDH1 at the cell surface and inhibits its internalization. Interacts with RAPGEF2. Interacts with RAB8B. Interacts with KLRG1. Forms a ternary complex composed of ADAM10, CADH1 and EPHA4; within the complex, CADH1 is cleaved by ADAM10 which disrupts adherens junctions. Interacts with SPEF1. Interacts with CTNNB1 and PKP2. Interacts with AMOTL2; the interaction may facilitate binding of radial actin fibers to cell junction complexes. Interacts with DSG3; the interaction is required for CDH1 localization to developing adherens junctions. In terms of processing, during apoptosis or with calcium influx, cleaved by a membrane-bound metalloproteinase (ADAM10), PS1/gamma-secretase and caspase-3. Processing by the metalloproteinase, induced by calcium influx, causes disruption of cell-cell adhesion and the subsequent release of beta-catenin into the cytoplasm. The residual membrane-tethered cleavage product is rapidly degraded via an intracellular proteolytic pathway. Cleavage by caspase-3 releases the cytoplasmic tail resulting in disintegration of the actin microfilament system. The gamma-secretase-mediated cleavage promotes disassembly of adherens junctions. During development of the cochlear organ of Corti, cleavage by ADAM10 at adherens junctions promotes pillar cell separation. Post-translationally, N-glycosylation at Asn-641 is essential for expression, folding and trafficking. Addition of bisecting N-acetylglucosamine by MGAT3 modulates its cell membrane location. Ubiquitinated by a SCF complex containing SKP2, which requires prior phosphorylation by CK1/CSNK1A1. Ubiquitinated by CBLL1/HAKAI, requires prior phosphorylation at Tyr-758. In terms of processing, O-glycosylated. O-manosylated by TMTC1, TMTC2, TMTC3 or TMTC4. Ser-289 and Thr-513 are O-manosylated by TMTC2 or TMTC4 but not TMTC1 or TMTC3.

It localises to the cell junction. The protein resides in the adherens junction. It is found in the cell membrane. Its subcellular location is the endosome. The protein localises to the golgi apparatus. It localises to the trans-Golgi network. The protein resides in the cytoplasm. It is found in the desmosome. In terms of biological role, cadherins are calcium-dependent cell adhesion proteins. They preferentially interact with themselves in a homophilic manner in connecting cells; cadherins may thus contribute to the sorting of heterogeneous cell types. CDH1 is involved in mechanisms regulating cell-cell adhesions, mobility and proliferation of epithelial cells. Promotes organization of radial actin fiber structure and cellular response to contractile forces, via its interaction with AMOTL2 which facilitates anchoring of radial actin fibers to CDH1 junction complexes at the cell membrane. Plays a role in the early stages of desmosome cell-cell junction formation via facilitating the recruitment of DSG2 and DSP to desmosome plaques. Has a potent invasive suppressor role. It is a ligand for integrin alpha-E/beta-7. E-Cad/CTF2 promotes non-amyloidogenic degradation of Abeta precursors. Has a strong inhibitory effect on APP C99 and C83 production. The chain is Cadherin-1 (Cdh1) from Rattus norvegicus (Rat).